The following is a 131-amino-acid chain: UPF0102 protein YraN (131 aa).

Positions 1–19 (MATVPTRSGSPRQLTTKQT) are enriched in polar residues. Residues 1 to 21 (MATVPTRSGSPRQLTTKQTGD) form a disordered region.

The protein belongs to the UPF0102 family.

This is UPF0102 protein YraN from Escherichia coli O7:K1 (strain IAI39 / ExPEC).